The following is a 73-amino-acid chain: Mu-sparatoxin-Hv2 (73 aa).

The N-terminal stretch at 1–20 (MKFAIVITLLLVAFSAVALA) is a signal peptide. A propeptide spanning residues 21–35 (DKSIERAVMDLITAR) is cleaved from the precursor. 3 cysteine pairs are disulfide-bonded: C39-C53, C46-C58, and C52-C68. At F72 the chain carries Phenylalanine amide.

Belongs to the neurotoxin 10 (Hwtx-1) family. In terms of tissue distribution, expressed by the venom gland.

It is found in the secreted. In terms of biological role, insecticidal toxin that potently and irreversibly blocks voltage-gated sodium channels (Nav) in cockroach dorsal unpaired median (DUM) neurons (IC(50)=833.7 nM). It does not change both the steady-state activation and inactivation curves, suggesting it acts as a pore blocker (possibly at Nav site 1). Does not show toxicity when intraperitoneally injected into mouse. The polypeptide is Mu-sparatoxin-Hv2 (Heteropoda venatoria (Brown huntsman spider)).